We begin with the raw amino-acid sequence, 91 residues long: Small ribosomal subunit protein bS18 (91 aa).

Belongs to the bacterial ribosomal protein bS18 family. As to quaternary structure, part of the 30S ribosomal subunit. Forms a tight heterodimer with protein bS6.

In terms of biological role, binds as a heterodimer with protein bS6 to the central domain of the 16S rRNA, where it helps stabilize the platform of the 30S subunit. This chain is Small ribosomal subunit protein bS18, found in Paraburkholderia xenovorans (strain LB400).